Reading from the N-terminus, the 329-residue chain is Peroxidase 56 (329 aa).

Residues 1–31 (MAALKMTISCFLFLQVIYCLLSSFAPTNVQG) form the signal peptide. Cystine bridges form between Cys41-Cys119, Cys74-Cys79, Cys125-Cys325, and Cys204-Cys236. The active-site Proton acceptor is the His72. Ca(2+)-binding residues include Asp73, Val76, Gly78, Glu80, and Ser82. The N-linked (GlcNAc...) asparagine glycan is linked to Asn158. Residue Pro167 participates in substrate binding. Asn172 is a glycosylation site (N-linked (GlcNAc...) asparagine). Heme b is bound at residue His197. Position 198 (Thr198) interacts with Ca(2+). Asn213 carries an N-linked (GlcNAc...) asparagine glycan. The Ca(2+) site is built by Asp248, Ser251, and Asp256.

This sequence belongs to the peroxidase family. Classical plant (class III) peroxidase subfamily. Heme b serves as cofactor. It depends on Ca(2+) as a cofactor.

It localises to the secreted. It carries out the reaction 2 a phenolic donor + H2O2 = 2 a phenolic radical donor + 2 H2O. Its function is as follows. Removal of H(2)O(2), oxidation of toxic reductants, biosynthesis and degradation of lignin, suberization, auxin catabolism, response to environmental stresses such as wounding, pathogen attack and oxidative stress. These functions might be dependent on each isozyme/isoform in each plant tissue. This is Peroxidase 56 (PER56) from Arabidopsis thaliana (Mouse-ear cress).